A 116-amino-acid polypeptide reads, in one-letter code: Ino eighty subunit 4 (116 aa).

A compositionally biased stretch (low complexity) spans 1–15 (MSQESSVLSESQEQL). 2 disordered regions span residues 1 to 40 (MSQE…PVLP) and 70 to 116 (EERQ…GLDS). The span at 84–108 (KGSDDKATRKKEPADEDPEVKQLEK) shows a compositional bias: basic and acidic residues.

As to quaternary structure, component of the chromatin-remodeling INO80 complex, at least composed of ARP4, ARP5, ARP8, RVB1, RVB2, TAF14, NHP10, IES1, IES3, IES4, IES6, ACT1, IES2, IES5 and INO80.

It localises to the nucleus. The polypeptide is Ino eighty subunit 4 (IES4) (Saccharomyces cerevisiae (strain ATCC 204508 / S288c) (Baker's yeast)).